The following is a 397-amino-acid chain: Enoyl-[acyl-carrier-protein] reductase [NADH] (397 aa).

Residues Gly-48–Tyr-53, Phe-74–Glu-75, Asp-111–Ala-112, and Val-139–Ala-140 each bind NAD(+). Substrate is bound at residue Tyr-225. The active-site Proton donor is the Tyr-235. NAD(+) contacts are provided by residues Lys-244 and Val-273–Thr-275.

Belongs to the TER reductase family. As to quaternary structure, monomer.

The enzyme catalyses a 2,3-saturated acyl-[ACP] + NAD(+) = a (2E)-enoyl-[ACP] + NADH + H(+). The protein operates within lipid metabolism; fatty acid biosynthesis. Involved in the final reduction of the elongation cycle of fatty acid synthesis (FAS II). Catalyzes the reduction of a carbon-carbon double bond in an enoyl moiety that is covalently linked to an acyl carrier protein (ACP). In Burkholderia mallei (strain SAVP1), this protein is Enoyl-[acyl-carrier-protein] reductase [NADH].